Here is a 390-residue protein sequence, read N- to C-terminus: Homeobox protein Meis1 (390 aa).

Positions Gly108 to Asp191 constitute an MEIS N-terminal domain. The span at Asp188–Thr202 shows a compositional bias: basic and acidic residues. A disordered region spans residues Asp188–Phe279. The segment at residues Arg272–Met334 is a DNA-binding region (homeobox; TALE-type). Residues Tyr299–Arg329 form an interaction with DNA region.

Belongs to the TALE/MEIS homeobox family. As to quaternary structure, interacts with pbx1 isoform b. As to expression, in the embryo, displays a broad expression pattern with high levels observed in tissues of neural cell fate such as midbrain, hindbrain, dorsal portion of the neural tube, and neural crest-derived branchial arches. Widely expressed in the adult with highest levels in brain and spleen.

Its subcellular location is the cytoplasm. The protein localises to the nucleus. Functionally, induces expression of a number of neural crest marker genes as part of a heterodimer with isoform b of pbx1, to specify neural crest cell fate. Binds to a highly conserved region in the promoter of the neural crest marker gene zic3. The sequence is that of Homeobox protein Meis1 (meis1) from Xenopus laevis (African clawed frog).